A 29-amino-acid polypeptide reads, in one-letter code: Chassatide C1 (29 aa).

Positions 1–29 (GDACGETCFTGICFTAGCSCNPWPTCTRN) form a cross-link, cyclopeptide (Gly-Asn). 3 disulfides stabilise this stretch: Cys4–Cys18, Cys8–Cys20, and Cys13–Cys26.

Post-translationally, this is a cyclic peptide. As to expression, expressed in leaf, fruit, pedical and stem but not in root (at protein level).

Its function is as follows. Probably participates in a plant defense mechanism. This Chassalia chartacea (Chassalia curviflora) protein is Chassatide C1.